A 62-amino-acid chain; its full sequence is uncharacterized protein (62 aa).

A compositionally biased stretch (polar residues) spans 1-13 (MGESKSPQESSSE). The segment at 1–62 (MGESKSPQES…SRREFRRKSG (62 aa)) is disordered. Residues 14–28 (GETKRKFREALDRKM) show a composition bias toward basic and acidic residues.

This is an uncharacterized protein from Mycobacterium tuberculosis (strain ATCC 25618 / H37Rv).